The primary structure comprises 385 residues: Putative mitochondrial carrier protein TRV_02148.2 (385 aa).

2 Solcar repeats span residues 24–124 (SNTL…LHAR) and 130–210 (RTAG…LRRR). The next 5 membrane-spanning stretches (helical) occupy residues 30–47 (GTAI…DSIL), 132–150 (AGNE…KLFT), 184–207 (WSAY…YLAL), 263–279 (YTIC…LEVI), and 294–310 (VVTV…LYML).

It belongs to the mitochondrial carrier (TC 2.A.29) family.

It localises to the mitochondrion inner membrane. In terms of biological role, may function as a mitochondrial transporter. The protein is Putative mitochondrial carrier protein TRV_02148.2 of Trichophyton verrucosum (strain HKI 0517).